We begin with the raw amino-acid sequence, 104 residues long: Phosphoribosyl-ATP pyrophosphatase (104 aa).

Belongs to the PRA-PH family.

The protein localises to the cytoplasm. The enzyme catalyses 1-(5-phospho-beta-D-ribosyl)-ATP + H2O = 1-(5-phospho-beta-D-ribosyl)-5'-AMP + diphosphate + H(+). It participates in amino-acid biosynthesis; L-histidine biosynthesis; L-histidine from 5-phospho-alpha-D-ribose 1-diphosphate: step 2/9. This Streptococcus gordonii (strain Challis / ATCC 35105 / BCRC 15272 / CH1 / DL1 / V288) protein is Phosphoribosyl-ATP pyrophosphatase.